The following is a 356-amino-acid chain: Dual-specificity RNA methyltransferase RlmN (356 aa).

The active-site Proton acceptor is glutamate 89. The 234-residue stretch at 108 to 341 folds into the Radical SAM core domain; that stretch reads KHARYTICVS…CTIRESKGLD (234 aa). The cysteines at positions 115 and 346 are disulfide-linked. The [4Fe-4S] cluster site is built by cysteine 122, cysteine 126, and cysteine 129. S-adenosyl-L-methionine-binding positions include 172–173, serine 204, 227–229, and asparagine 303; these read GE and SLH. Cysteine 346 serves as the catalytic S-methylcysteine intermediate.

Belongs to the radical SAM superfamily. RlmN family. [4Fe-4S] cluster serves as cofactor.

The protein localises to the cytoplasm. The catalysed reaction is adenosine(2503) in 23S rRNA + 2 reduced [2Fe-2S]-[ferredoxin] + 2 S-adenosyl-L-methionine = 2-methyladenosine(2503) in 23S rRNA + 5'-deoxyadenosine + L-methionine + 2 oxidized [2Fe-2S]-[ferredoxin] + S-adenosyl-L-homocysteine. It carries out the reaction adenosine(37) in tRNA + 2 reduced [2Fe-2S]-[ferredoxin] + 2 S-adenosyl-L-methionine = 2-methyladenosine(37) in tRNA + 5'-deoxyadenosine + L-methionine + 2 oxidized [2Fe-2S]-[ferredoxin] + S-adenosyl-L-homocysteine. Its function is as follows. Specifically methylates position 2 of adenine 2503 in 23S rRNA and position 2 of adenine 37 in tRNAs. m2A2503 modification seems to play a crucial role in the proofreading step occurring at the peptidyl transferase center and thus would serve to optimize ribosomal fidelity. The polypeptide is Dual-specificity RNA methyltransferase RlmN (Campylobacter lari (strain RM2100 / D67 / ATCC BAA-1060)).